We begin with the raw amino-acid sequence, 152 residues long: Large ribosomal subunit protein uL13 (152 aa).

Residues 129–152 (EHPHEAQSPEVLDVKSMNKKNTRS) are disordered.

It belongs to the universal ribosomal protein uL13 family. As to quaternary structure, part of the 50S ribosomal subunit.

Its function is as follows. This protein is one of the early assembly proteins of the 50S ribosomal subunit, although it is not seen to bind rRNA by itself. It is important during the early stages of 50S assembly. This is Large ribosomal subunit protein uL13 from Ruegeria sp. (strain TM1040) (Silicibacter sp.).